Here is a 496-residue protein sequence, read N- to C-terminus: Polyphosphate:AMP phosphotransferase (496 aa).

PPK2 stretches follow at residues 11–234 (IDKD…LQAA) and 269–495 (LDKD…YKKD).

It belongs to the polyphosphate kinase 2 (PPK2) family. Class II subfamily. Homodimer. It depends on Mg(2+) as a cofactor.

It carries out the reaction [phosphate](n) + ADP = [phosphate](n+1) + AMP. In terms of biological role, uses inorganic polyphosphate (polyP) as a donor to convert AMP to ADP. Can also convert GMP to GDP, with lower efficiency. Cannot dephosphorylate ADP in the presence of polyP. The protein is Polyphosphate:AMP phosphotransferase of Pseudomonas aeruginosa (strain ATCC 15692 / DSM 22644 / CIP 104116 / JCM 14847 / LMG 12228 / 1C / PRS 101 / PAO1).